A 101-amino-acid chain; its full sequence is Ascorbate-specific PTS system EIIB component (101 aa).

In terms of domain architecture, PTS EIIB type-2 spans 3-96 (VRILAVCGNG…KLLEVIKAHF (94 aa)). The active-site Phosphocysteine intermediate is the C9. A Phosphocysteine modification is found at C9.

The protein localises to the cytoplasm. It carries out the reaction N(pros)-phospho-L-histidyl-[protein] + L-ascorbate(out) = L-ascorbate 6-phosphate(in) + L-histidyl-[protein]. In terms of biological role, the phosphoenolpyruvate-dependent sugar phosphotransferase system (sugar PTS), a major carbohydrate active transport system, catalyzes the phosphorylation of incoming sugar substrates concomitantly with their translocation across the cell membrane. The enzyme II UlaABC PTS system is involved in ascorbate transport. This is Ascorbate-specific PTS system EIIB component (ulaB) from Escherichia coli O6:H1 (strain CFT073 / ATCC 700928 / UPEC).